The chain runs to 124 residues: Small ribosomal subunit protein uS12 (124 aa).

This sequence belongs to the universal ribosomal protein uS12 family. As to quaternary structure, part of the 30S ribosomal subunit. Contacts proteins S8 and S17. May interact with IF1 in the 30S initiation complex.

Its function is as follows. With S4 and S5 plays an important role in translational accuracy. In terms of biological role, interacts with and stabilizes bases of the 16S rRNA that are involved in tRNA selection in the A site and with the mRNA backbone. Located at the interface of the 30S and 50S subunits, it traverses the body of the 30S subunit contacting proteins on the other side and probably holding the rRNA structure together. The combined cluster of proteins S8, S12 and S17 appears to hold together the shoulder and platform of the 30S subunit. The sequence is that of Small ribosomal subunit protein uS12 from Photorhabdus laumondii subsp. laumondii (strain DSM 15139 / CIP 105565 / TT01) (Photorhabdus luminescens subsp. laumondii).